The sequence spans 310 residues: Thymidine kinase (310 aa).

ATP is bound at residue 17–24 (GPFGIGKT). The active-site Proton acceptor is the Glu45. Gln86 contributes to the substrate binding site. Arg176 lines the ATP pocket. Arg182 lines the substrate pocket.

This sequence belongs to the herpesviridae thymidine kinase family. In terms of assembly, homodimer.

The catalysed reaction is thymidine + ATP = dTMP + ADP + H(+). In terms of biological role, catalyzes the transfer of the gamma-phospho group of ATP to thymidine to generate dTMP in the salvage pathway of pyrimidine synthesis. The dTMP serves as a substrate for DNA polymerase during viral DNA replication. Allows the virus to be reactivated and to grow in non-proliferative cells lacking a high concentration of phosphorylated nucleic acid precursors. This is Thymidine kinase from Gallus gallus (Chicken).